Reading from the N-terminus, the 132-residue chain is Histone H2A.2 (132 aa).

It belongs to the histone H2A family. The nucleosome is a histone octamer containing two molecules each of H2A, H2B, H3 and H4 assembled in one H3-H4 heterotetramer and two H2A-H2B heterodimers. The octamer wraps approximately 147 bp of DNA.

The protein resides in the nucleus. It localises to the chromosome. Core component of nucleosome. Nucleosomes wrap and compact DNA into chromatin, limiting DNA accessibility to the cellular machineries which require DNA as a template. Histones thereby play a central role in transcription regulation, DNA repair, DNA replication and chromosomal stability. DNA accessibility is regulated via a complex set of post-translational modifications of histones, also called histone code, and nucleosome remodeling. The protein is Histone H2A.2 of Leishmania infantum.